We begin with the raw amino-acid sequence, 361 residues long: Core-capsid bridging protein (361 aa).

Residues 311–321 (RRRRVARRSKS) show a composition bias toward basic residues. A disordered region spans residues 311–331 (RRRRVARRSKSTGRFVAAPRK).

It belongs to the adenoviridae core-capsid bridging protein family. Monomer. Homodimer. Exists in equilibrium between monomers and dimers in solution. Interacts with the histone-like nucleoprotein; this interactions bridge the virus core to the capsid. Interacts with core protein X; this interactions bridge the virus core to the capsid. Interacts with the endosome lysis protein VI; this interactions bridge the virus core to the capsid. Interacts with the peripentonal hexons. Interacts with host NPM1; this interaction might play a role in virus assembly.

Its subcellular location is the virion. It is found in the host nucleus. It localises to the host nucleolus. Functionally, associates loosely with the viral DNA to form an outer shell around the nucleoprotein-DNA complex and links it with the capsid by binding the endosome lysis protein. Dissociates from the viral genome during entry. Might be involved in nuclear capsid assembly of the viral particles through its association with NPM1/nucleophosmin. This chain is Core-capsid bridging protein, found in Bovine adenovirus 2 (BAdV-2).